We begin with the raw amino-acid sequence, 692 residues long: DNA repair protein RAD34 (692 aa).

Positions 1–38 (MAKRLLESSQNDQANRKNSKIEKKEVSFYEEEETDDSF) are disordered. The segment covering 28–38 (FYEEEETDDSF) has biased composition (acidic residues).

This sequence belongs to the XPC family.

The protein resides in the nucleus. Involved in nucleotide excision repair (NER) of damaged ribosomal DNA (rDNA). Required for the repair of the RNA polymerase I-transcribed strand of rDNA. The chain is DNA repair protein RAD34 (RAD34) from Saccharomyces cerevisiae (strain ATCC 204508 / S288c) (Baker's yeast).